The primary structure comprises 166 residues: Testis-expressed protein 51 (166 aa).

Residues 1–15 (MLPLLIICLLPAIEG) form the signal peptide. Residues 138-154 (SLWAVSLSSALLLAIAG) traverse the membrane as a helical segment.

The protein localises to the membrane. This chain is Testis-expressed protein 51, found in Homo sapiens (Human).